We begin with the raw amino-acid sequence, 277 residues long: Shikimate dehydrogenase (NADP(+)) (277 aa).

Residues 15-17 (SLS) and Thr62 contribute to the shikimate site. Lys66 (proton acceptor) is an active-site residue. Asn87 and Asp102 together coordinate shikimate. NADP(+)-binding positions include 127–131 (GAGGA), 151–156 (NRTVSK), and Ile219. Tyr221 is a binding site for shikimate. Gly242 serves as a coordination point for NADP(+).

Belongs to the shikimate dehydrogenase family. In terms of assembly, homodimer.

The enzyme catalyses shikimate + NADP(+) = 3-dehydroshikimate + NADPH + H(+). It functions in the pathway metabolic intermediate biosynthesis; chorismate biosynthesis; chorismate from D-erythrose 4-phosphate and phosphoenolpyruvate: step 4/7. Functionally, involved in the biosynthesis of the chorismate, which leads to the biosynthesis of aromatic amino acids. Catalyzes the reversible NADPH linked reduction of 3-dehydroshikimate (DHSA) to yield shikimate (SA). This Geobacillus sp. (strain WCH70) protein is Shikimate dehydrogenase (NADP(+)).